The following is an 863-amino-acid chain: Linoleate 9S-lipoxygenase 1 (863 aa).

One can recognise a PLAT domain in the interval 32–158 (RDFTASLLDN…KYHYNRIFFA (127 aa)). The Lipoxygenase domain maps to 161–863 (SYLPSQMPEA…ARGIPNSISI (703 aa)). The disordered stretch occupies residues 204-244 (NDLGEPDRDNPRPVLGGSQKHPYPRRGRTGRIPTKKDPNSE). Residues H518, H523, H709, N713, and I863 each coordinate Fe cation.

This sequence belongs to the lipoxygenase family. In terms of assembly, monomer. Requires Fe cation as cofactor.

The protein resides in the cytoplasm. It catalyses the reaction (9Z,12Z)-octadecadienoate + O2 = (9S)-hydroperoxy-(10E,12Z)-octadecadienoate. Its pathway is lipid metabolism; oxylipin biosynthesis. In terms of biological role, plant lipoxygenase may be involved in a number of diverse aspects of plant physiology including growth and development, pest resistance, and senescence or responses to wounding. This lipoxygenase introduces molecular oxygen exclusively into the C-9 position of linoleic and linolenic. The chain is Linoleate 9S-lipoxygenase 1 from Oryza sativa subsp. japonica (Rice).